The sequence spans 1091 residues: ATP-dependent RNA helicase ddx54 (1091 aa).

Disordered regions lie at residues 1–63 (MVKP…KEEF) and 150–231 (DNSN…KTGG). The span at 26-35 (MKGKKLETKS) shows a compositional bias: basic and acidic residues. The segment covering 150–161 (DNSNFDNNGDQF) has biased composition (polar residues). Residues 196–207 (KKEEIESSEKFE) are compositionally biased toward basic and acidic residues. The Q motif motif lies at 230-258 (GGFQSMDLTKNLLKAILKKGFNVPTPIQR). The 173-residue stretch at 261 to 433 (IPMILDGHDI…RAGLNNPKLI (173 aa)) folds into the Helicase ATP-binding domain. 274 to 281 (ARTGSGKT) contacts ATP. The DEAD box motif lies at 381-384 (DEAD). In terms of domain architecture, Helicase C-terminal spans 478–632 (TETTTTTTTN…KFQYEGQTIN (155 aa)). Disordered regions lie at residues 801-896 (EEML…TPEN) and 933-1091 (KRKG…KSRK). Residues 814–823 (DNNKDIKMNE) show a composition bias toward basic and acidic residues. The span at 824-855 (NDDENDDDDEEGENDDDEEEENEKDEDDEEDE) shows a compositional bias: acidic residues. Composition is skewed to basic and acidic residues over residues 865–874 (ESSDKNDNNK), 944–975 (DADR…EEWK), and 1008–1019 (QGREKEKKDNKA). Basic residues predominate over residues 1020-1029 (SHAKGSHGLK). The segment covering 1031 to 1052 (RPSELKDKNQISKNRSEKERKM) has biased composition (basic and acidic residues). Residues 1068 to 1079 (SGGGGGGKGSKF) show a composition bias toward gly residues.

The protein belongs to the DEAD box helicase family. DDX54/DBP10 subfamily.

The protein resides in the nucleus. It is found in the nucleolus. It catalyses the reaction ATP + H2O = ADP + phosphate + H(+). ATP-binding RNA helicase which may be involved in the ribosome biogenesis. The polypeptide is ATP-dependent RNA helicase ddx54 (helA) (Dictyostelium discoideum (Social amoeba)).